A 258-amino-acid chain; its full sequence is Thiazole synthase (258 aa).

Lysine 98 serves as the catalytic Schiff-base intermediate with DXP. 1-deoxy-D-xylulose 5-phosphate is bound by residues glycine 159, 185-186 (AG), and 207-208 (NT).

The protein belongs to the ThiG family. In terms of assembly, homotetramer. Forms heterodimers with either ThiH or ThiS.

It localises to the cytoplasm. It carries out the reaction [ThiS sulfur-carrier protein]-C-terminal-Gly-aminoethanethioate + 2-iminoacetate + 1-deoxy-D-xylulose 5-phosphate = [ThiS sulfur-carrier protein]-C-terminal Gly-Gly + 2-[(2R,5Z)-2-carboxy-4-methylthiazol-5(2H)-ylidene]ethyl phosphate + 2 H2O + H(+). It participates in cofactor biosynthesis; thiamine diphosphate biosynthesis. Its function is as follows. Catalyzes the rearrangement of 1-deoxy-D-xylulose 5-phosphate (DXP) to produce the thiazole phosphate moiety of thiamine. Sulfur is provided by the thiocarboxylate moiety of the carrier protein ThiS. In vitro, sulfur can be provided by H(2)S. The chain is Thiazole synthase from Cytophaga hutchinsonii (strain ATCC 33406 / DSM 1761 / CIP 103989 / NBRC 15051 / NCIMB 9469 / D465).